Consider the following 187-residue polypeptide: Elongation factor P (187 aa).

Belongs to the elongation factor P family.

It localises to the cytoplasm. The protein operates within protein biosynthesis; polypeptide chain elongation. Its function is as follows. Involved in peptide bond synthesis. Stimulates efficient translation and peptide-bond synthesis on native or reconstituted 70S ribosomes in vitro. Probably functions indirectly by altering the affinity of the ribosome for aminoacyl-tRNA, thus increasing their reactivity as acceptors for peptidyl transferase. This Synechococcus sp. (strain CC9311) protein is Elongation factor P.